We begin with the raw amino-acid sequence, 1390 residues long: DNA-directed RNA polymerase III subunit RPC1 (1390 aa).

Positions 69, 72, 79, 82, 109, and 112 each coordinate Zn(2+). DNA is bound at residue Lys144. Zn(2+) is bound by residues Cys156 and Cys159. DNA contacts are provided by Lys167, Ser326, Lys348, Arg353, Arg360, and Arg366. Lys445 carries the N6-acetyllysine modification. Arg464 contributes to the RNA binding site. 3 residues coordinate Mg(2+): Asp499, Asp501, and Asp503. Asp503 serves as a coordination point for RNA. Positions 843–884 are bridging helix; it reads TPTEFFFHTMAGREGLVDTAVKTAETGYMQRRLVKSLEDLCS. The trigger loop stretch occupies residues 1029 to 1070; that stretch reads PGSAVGALCAQSIGEPGTQMTLKTFHFAGVASMNITLGVPRI. The DNA site is built by Arg1159, Arg1305, and Lys1323.

Belongs to the RNA polymerase beta' chain family. Component of the RNA polymerase III (Pol III) (Pol III) complex consisting of 17 subunits: a ten-subunit catalytic core composed of POLR3A/RPC1, POLR3B/RPC2, POLR1C/RPAC1, POLR1D/RPAC2, POLR3K/RPC10, POLR2E/RPABC1, POLR2F/RPABC2, POLR2H/RPABC3, POLR2K/RPABC4 and POLR2L/RPABC5; a mobile stalk composed of two subunits POLR3H/RPC8 and CRCP/RPC9, protruding from the core and functioning primarily in transcription initiation; and additional subunits homologous to general transcription factors of the RNA polymerase II machinery, POLR3C/RPC3-POLR3F/RPC6-POLR3G/RPC7 heterotrimer required for transcription initiation and POLR3D/RPC4-POLR3E/RPC5 heterodimer involved in both transcription initiation and termination. Pol III exists as two alternative complexes defined by the mutually exclusive incorporation of subunit POLR3G/RPC7alpha or POLR3GL/RPC7beta. The presence of POLR3G/RPC7alpha or POLR3GL/RPC7beta differentially modulates the transcription potential of Pol III, with POLR3G/RPC7alpha specifically associated with transcription of snaR-A non-coding RNAs. As part of the RNA polymerase III complex, interacts with PKP2. Requires Mg(2+) as cofactor. Expressed in the brain, in the cortex and the white matter (at protein level).

The protein localises to the nucleus. The protein resides in the cytoplasm. Its subcellular location is the cytosol. The catalysed reaction is RNA(n) + a ribonucleoside 5'-triphosphate = RNA(n+1) + diphosphate. Functionally, catalytic core component of RNA polymerase III (Pol III), a DNA-dependent RNA polymerase which synthesizes small non-coding RNAs using the four ribonucleoside triphosphates as substrates. Synthesizes 5S rRNA, snRNAs, tRNAs and miRNAs from at least 500 distinct genomic loci. Pol III-mediated transcription cycle proceeds through transcription initiation, transcription elongation and transcription termination stages. During transcription initiation, Pol III is recruited to DNA promoters type I, II or III with the help of general transcription factors and other specific initiation factors. Once the polymerase has escaped from the promoter it enters the elongation phase during which RNA is actively polymerized, based on complementarity with the template DNA strand. Transcription termination involves the release of the RNA transcript and polymerase from the DNA. Forms Pol III active center together with the second largest subunit POLR3B/RPC2. Appends one nucleotide at a time to the 3' end of the nascent RNA, with POLR3A/RPC1 contributing a Mg(2+)-coordinating DxDGD motif, and POLR3B/RPC2 participating in the coordination of a second Mg(2+) ion and providing lysine residues believed to facilitate Watson-Crick base pairing between the incoming nucleotide and template base. Typically, Mg(2+) ions direct a 5' nucleoside triphosphate to form a phosphodiester bond with the 3' hydroxyl of the preceding nucleotide of the nascent RNA, with the elimination of pyrophosphate. Pol III plays a key role in sensing and limiting infection by intracellular bacteria and DNA viruses. Acts as a nuclear and cytosolic DNA sensor involved in innate immune response. Can sense non-self dsDNA that serves as template for transcription into dsRNA. The non-self RNA polymerase III transcripts, such as Epstein-Barr virus-encoded RNAs (EBERs) induce type I interferon and NF-kappa-B through the RIG-I pathway. This is DNA-directed RNA polymerase III subunit RPC1 from Homo sapiens (Human).